The primary structure comprises 217 residues: Small ribosomal subunit protein uS3 (217 aa).

The KH type-2 domain maps to 38-106; that stretch reads IRKFVQKELA…QVHINIIEIK (69 aa).

The protein belongs to the universal ribosomal protein uS3 family. As to quaternary structure, part of the 30S ribosomal subunit. Forms a tight complex with proteins S10 and S14.

Functionally, binds the lower part of the 30S subunit head. Binds mRNA in the 70S ribosome, positioning it for translation. The protein is Small ribosomal subunit protein uS3 of Streptococcus sanguinis (strain SK36).